A 193-amino-acid chain; its full sequence is Ion-translocating oxidoreductase complex subunit A (193 aa).

The next 6 membrane-spanning stretches (helical) occupy residues leucine 5 to leucine 25, valine 39 to valine 59, leucine 72 to isoleucine 92, isoleucine 102 to leucine 122, valine 134 to leucine 154, and isoleucine 170 to leucine 190.

This sequence belongs to the NqrDE/RnfAE family. In terms of assembly, the complex is composed of six subunits: RnfA, RnfB, RnfC, RnfD, RnfE and RnfG.

The protein resides in the cell inner membrane. Part of a membrane-bound complex that couples electron transfer with translocation of ions across the membrane. This chain is Ion-translocating oxidoreductase complex subunit A, found in Tolumonas auensis (strain DSM 9187 / NBRC 110442 / TA 4).